The primary structure comprises 324 residues: Anthranilate phosphoribosyltransferase (324 aa).

Residues G75, 78-79, T83, 85-88, 102-110, and S114 contribute to the 5-phospho-alpha-D-ribose 1-diphosphate site; these read GD, NVST, and KHGNFGITG. G75 provides a ligand contact to anthranilate. S87 is a binding site for Mg(2+). N105 is an anthranilate binding site. R160 contributes to the anthranilate binding site. Mg(2+) contacts are provided by D216 and E217.

The protein belongs to the anthranilate phosphoribosyltransferase family. Homodimer. Mg(2+) is required as a cofactor.

It carries out the reaction N-(5-phospho-beta-D-ribosyl)anthranilate + diphosphate = 5-phospho-alpha-D-ribose 1-diphosphate + anthranilate. Its pathway is amino-acid biosynthesis; L-tryptophan biosynthesis; L-tryptophan from chorismate: step 2/5. Functionally, catalyzes the transfer of the phosphoribosyl group of 5-phosphorylribose-1-pyrophosphate (PRPP) to anthranilate to yield N-(5'-phosphoribosyl)-anthranilate (PRA). The sequence is that of Anthranilate phosphoribosyltransferase from Picrophilus torridus (strain ATCC 700027 / DSM 9790 / JCM 10055 / NBRC 100828 / KAW 2/3).